Here is a 274-residue protein sequence, read N- to C-terminus: Copper chaperone for superoxide dismutase (274 aa).

The HMA domain maps to 11-74 (ACMLEFAVQM…LLEDTGRQAV (64 aa)). Positions 22 and 25 each coordinate Cu cation. A Glycyl lysine isopeptide (Lys-Gly) (interchain with G-Cter in ubiquitin) cross-link involves residue K76. A superoxide dismutase-like region spans residues 88–234 (AAVAILGGSG…LACGIIARSA (147 aa)). The cysteines at positions 141 and 227 are disulfide-linked. H147, H155, H164, and D167 together coordinate Zn(2+). Glycyl lysine isopeptide (Lys-Gly) (interchain with G-Cter in ubiquitin) cross-links involve residues K189, K216, and K241. Cu cation is bound by residues C244 and C246.

This sequence in the C-terminal section; belongs to the Cu-Zn superoxide dismutase family. Homodimer, and heterodimer with SOD1. Interacts with COMMD1. Interacts with XIAP/BIRC4. Interacts with SLC31A1(via C-terminal domain); this interaction is Cu(1+)-mediated. The heterodimer CCS:SOD1 interacts with SLC31A1; this heterotrimer is Cu(1+)-mediated and its maintenance is regulated through SOD1 activation. Requires Cu(2+) as cofactor. The cofactor is Zn(2+). Ubiquitinion by XIAP/BIRC4 leads to enhancement of its chaperone activity toward its physiologic target, SOD1, rather than proteasomal degradation. XIAP/BIRC4 preferentially ubiquitinates at Lys-241.

It is found in the cytoplasm. Delivers copper to copper zinc superoxide dismutase (SOD1). This Sus scrofa (Pig) protein is Copper chaperone for superoxide dismutase.